Consider the following 534-residue polypeptide: Peptide chain release factor 3 (534 aa).

The tr-type G domain maps to 9–278; sequence ARRRTFAIIS…FFIEHAPPPQ (270 aa). Residues 18–25, 86–90, and 140–143 contribute to the GTP site; these read SHPDAGKT, DTPGH, and NKLD.

It belongs to the TRAFAC class translation factor GTPase superfamily. Classic translation factor GTPase family. PrfC subfamily.

It is found in the cytoplasm. Increases the formation of ribosomal termination complexes and stimulates activities of RF-1 and RF-2. It binds guanine nucleotides and has strong preference for UGA stop codons. It may interact directly with the ribosome. The stimulation of RF-1 and RF-2 is significantly reduced by GTP and GDP, but not by GMP. This is Peptide chain release factor 3 from Xanthomonas oryzae pv. oryzae (strain MAFF 311018).